A 357-amino-acid polypeptide reads, in one-letter code: 4-hydroxyphenylpyruvate dioxygenase (357 aa).

VOC domains follow at residues 17–137 (GFEF…LVDR) and 165–316 (YIDH…IFTD). H168, H246, and E325 together coordinate Fe cation.

The protein belongs to the 4HPPD family. As to quaternary structure, homotetramer. Fe cation serves as cofactor.

It carries out the reaction 3-(4-hydroxyphenyl)pyruvate + O2 = homogentisate + CO2. It functions in the pathway amino-acid degradation; L-phenylalanine degradation; acetoacetate and fumarate from L-phenylalanine: step 3/6. The chain is 4-hydroxyphenylpyruvate dioxygenase (hpd) from Pseudomonas aeruginosa (strain ATCC 15692 / DSM 22644 / CIP 104116 / JCM 14847 / LMG 12228 / 1C / PRS 101 / PAO1).